A 442-amino-acid chain; its full sequence is Asparagine--tRNA ligase (442 aa).

Belongs to the class-II aminoacyl-tRNA synthetase family. As to quaternary structure, homodimer.

Its subcellular location is the cytoplasm. The enzyme catalyses tRNA(Asn) + L-asparagine + ATP = L-asparaginyl-tRNA(Asn) + AMP + diphosphate + H(+). This chain is Asparagine--tRNA ligase, found in Koribacter versatilis (strain Ellin345).